The sequence spans 80 residues: Exodeoxyribonuclease 7 small subunit (80 aa).

It belongs to the XseB family. As to quaternary structure, heterooligomer composed of large and small subunits.

It is found in the cytoplasm. The catalysed reaction is Exonucleolytic cleavage in either 5'- to 3'- or 3'- to 5'-direction to yield nucleoside 5'-phosphates.. Bidirectionally degrades single-stranded DNA into large acid-insoluble oligonucleotides, which are then degraded further into small acid-soluble oligonucleotides. This chain is Exodeoxyribonuclease 7 small subunit, found in Phenylobacterium zucineum (strain HLK1).